Here is a 473-residue protein sequence, read N- to C-terminus: Probable lipid II flippase MurJ (473 aa).

The next 13 helical transmembrane spans lie at 31–51 (TFGA…PFFL), 90–110 (LVTL…ASIF), 125–145 (LIRL…FYSV), 153–173 (FLPA…CLFG), 177–197 (WAAA…LPFG), 215–235 (FFGT…DVNV), 253–273 (LYQL…LSTL), 300–320 (IGLM…GAFT), 327–347 (SAQI…FNLL), 360–380 (PFFA…ILGF), 382–402 (MGAS…FVFL), 414–434 (IFKI…LRGS), and 439–459 (LGTI…SKLL).

Belongs to the MurJ/MviN family.

Its subcellular location is the cell inner membrane. It participates in cell wall biogenesis; peptidoglycan biosynthesis. Involved in peptidoglycan biosynthesis. Transports lipid-linked peptidoglycan precursors from the inner to the outer leaflet of the cytoplasmic membrane. This chain is Probable lipid II flippase MurJ, found in Thermotoga maritima (strain ATCC 43589 / DSM 3109 / JCM 10099 / NBRC 100826 / MSB8).